The chain runs to 271 residues: Phosphatidylinositol transfer protein beta isoform (271 aa).

N6-acetyllysine is present on Lys215. Ser262 is subject to Phosphoserine.

The protein belongs to the PtdIns transfer protein family. PI transfer class I subfamily. Post-translationally, constitutive phosphorylation of Ser-262 has no effect on phospholipid transfer activity but is required for Golgi targeting.

The protein resides in the golgi apparatus. Its subcellular location is the golgi apparatus membrane. It is found in the endoplasmic reticulum membrane. It catalyses the reaction a 1,2-diacyl-sn-glycero-3-phosphocholine(in) = a 1,2-diacyl-sn-glycero-3-phosphocholine(out). The catalysed reaction is a 1,2-diacyl-sn-glycero-3-phospho-(1D-myo-inositol)(in) = a 1,2-diacyl-sn-glycero-3-phospho-(1D-myo-inositol)(out). It carries out the reaction an N-(acyl)-sphingosylphosphocholine(in) = an N-(acyl)-sphingosylphosphocholine(out). Functionally, catalyzes the transfer of phosphatidylinositol, phosphatidylcholine and sphingomyelin between membranes. Required for COPI-mediated retrograde transport from the Golgi to the endoplasmic reticulum; phosphatidylinositol and phosphatidylcholine transfer activity is essential for this function. The polypeptide is Phosphatidylinositol transfer protein beta isoform (PITPNB) (Bos taurus (Bovine)).